The following is a 55-amino-acid chain: Ferredoxin (55 aa).

4Fe-4S ferredoxin-type domains lie at 2-26 (YKITDECIACGSCADQCPVEAISEG) and 27-55 (SIYEIDEALCTDCGACADQCPVEAIVPED). [4Fe-4S] cluster contacts are provided by Cys8, Cys11, Cys14, Cys18, Cys36, Cys39, Cys42, and Cys46.

[4Fe-4S] cluster is required as a cofactor.

Its function is as follows. Ferredoxins are iron-sulfur proteins that transfer electrons in a wide variety of metabolic reactions. This chain is Ferredoxin, found in Butyribacterium methylotrophicum.